The chain runs to 268 residues: L-aspartate dehydrogenase (268 aa).

NAD(+) contacts are provided by alanine 125 and asparagine 191. Histidine 221 is a catalytic residue.

The protein belongs to the L-aspartate dehydrogenase family.

It carries out the reaction L-aspartate + NADP(+) + H2O = oxaloacetate + NH4(+) + NADPH + H(+). The enzyme catalyses L-aspartate + NAD(+) + H2O = oxaloacetate + NH4(+) + NADH + H(+). Its pathway is cofactor biosynthesis; NAD(+) biosynthesis; iminoaspartate from L-aspartate (dehydrogenase route): step 1/1. In terms of biological role, specifically catalyzes the NAD or NADP-dependent dehydrogenation of L-aspartate to iminoaspartate. The polypeptide is L-aspartate dehydrogenase (Ralstonia nicotianae (strain ATCC BAA-1114 / GMI1000) (Ralstonia solanacearum)).